The following is a 1679-amino-acid chain: Maestro heat-like repeat-containing protein family member 2A (1679 aa).

HEAT repeat units lie at residues 68–91 (ATTD…ISTQ), 92–128 (RKMN…QMRD), 190–229 (MPYM…TVQF), 293–313 (EQVY…GHWP), 314–350 (LFPS…ELHV), 380–417 (SYPK…ADDP), 422–459 (KTIY…SGFQ), 571–610 (PAPQ…SIAP), 614–654 (DMWE…SLKK), 737–774 (KTVL…ETVK), 848–887 (SALT…MKPF), 991–1028 (GQFG…LHVS), 1219–1261 (DPLM…SHGP), 1387–1425 (KLLR…GAPR), and 1632–1669 (MDLV…CNQH).

This Mus musculus (Mouse) protein is Maestro heat-like repeat-containing protein family member 2A (Mroh2a).